Reading from the N-terminus, the 409-residue chain is Serine/threonine transporter SstT (409 aa).

The next 9 helical transmembrane spans lie at Leu24–Phe44, Phe48–Ile68, Ile82–Met102, Ala142–Leu162, Leu194–Gly214, Leu218–Val238, Ile292–Met312, Gly319–Cys339, and Val365–Thr385.

This sequence belongs to the dicarboxylate/amino acid:cation symporter (DAACS) (TC 2.A.23) family.

It is found in the cell inner membrane. The catalysed reaction is L-serine(in) + Na(+)(in) = L-serine(out) + Na(+)(out). It carries out the reaction L-threonine(in) + Na(+)(in) = L-threonine(out) + Na(+)(out). Its function is as follows. Involved in the import of serine and threonine into the cell, with the concomitant import of sodium (symport system). The protein is Serine/threonine transporter SstT of Neisseria meningitidis serogroup C / serotype 2a (strain ATCC 700532 / DSM 15464 / FAM18).